A 432-amino-acid polypeptide reads, in one-letter code: MTAYFSTPEKIQASAERIAAIIDAKPNGYFYPPAYFGKPGFLNFTPNVEVAQRAALKKNLPGILATFACGTVQREAGIELQKQTSYGNWNGPGFSGFSTGQQDGSGDLIFQLLVAKAMPPGECQPNAAGGLNRNFDATAFKNSSHPEIPPFATITDIPSVWNQQERSLAQWDGSVKMAFWRNIAAQLPIVGDPSKIDLVNTGVVANFLDGLPPAAYPFDVDMASAVRGEALFKDNCAVCHKPHNDTIYQFRDIGTDMNRAAVLNDAAFHLFAAGFQASCHDQDFLYRSPTGEEVRPCRMAGEDVITARTTPAVQGYVAEVLDGVWARAPYLHNGSIPTLYHLLVPASRPEQFLRGAIQYDTAKVGYVLDPAVTGLVADTSPTLTIYDRRKDGHAGTGHDRNLVVDGKLRRLDWSGPQYADALKDLIEYLKTR.

The Cytochrome c domain occupies 223 to 432; it reads ASAVRGEALF…KDLIEYLKTR (210 aa). Positions 236, 239, and 240 each coordinate heme c.

This is an uncharacterized protein from Sinorhizobium fredii (strain NBRC 101917 / NGR234).